A 111-amino-acid chain; its full sequence is Putative pterin-4-alpha-carbinolamine dehydratase (111 aa).

It belongs to the pterin-4-alpha-carbinolamine dehydratase family.

The enzyme catalyses (4aS,6R)-4a-hydroxy-L-erythro-5,6,7,8-tetrahydrobiopterin = (6R)-L-erythro-6,7-dihydrobiopterin + H2O. The protein is Putative pterin-4-alpha-carbinolamine dehydratase of Marinobacter nauticus (strain ATCC 700491 / DSM 11845 / VT8) (Marinobacter aquaeolei).